A 350-amino-acid polypeptide reads, in one-letter code: MTKITNDLFLKAARKEQVDRIPVWYMRQAGRSQPEYRKLKEKYSLFEITHQPEICAYVTKLPVDQYGVDAAILYKDIMTPLPGMGVDVEIKSGIGPVIHNPIRTFQDVEKLAIFKPEIEVPYVLDTIKLLADDMLDVPLIGFAGAPFTLASYMIEGGPSKNYHQTKSFMYREPEVWAILMEKLGRMTANYLIAQINAGASAVQLFDSWVGALSRADYAKYIRPVIEMIVSEVKAAHPTTPIIMQAVGASHLLAEWETMPLDVVGVDWRETITSAREKVPTKAIQGNLDPSTLLAPAKCLEEAERILQEGVLEPGYIFNLGHGVFPEVPPEMLKKLTNYIHERSEILLKKG.

Residues 27–31 (RQAGR), phenylalanine 46, aspartate 76, tyrosine 152, serine 207, and histidine 321 each bind substrate.

It belongs to the uroporphyrinogen decarboxylase family. As to quaternary structure, homodimer.

Its subcellular location is the cytoplasm. It catalyses the reaction uroporphyrinogen III + 4 H(+) = coproporphyrinogen III + 4 CO2. It functions in the pathway porphyrin-containing compound metabolism; protoporphyrin-IX biosynthesis; coproporphyrinogen-III from 5-aminolevulinate: step 4/4. Its function is as follows. Catalyzes the decarboxylation of four acetate groups of uroporphyrinogen-III to yield coproporphyrinogen-III. In Listeria monocytogenes serotype 4a (strain HCC23), this protein is Uroporphyrinogen decarboxylase.